Reading from the N-terminus, the 184-residue chain is Small ribosomal subunit protein uS4c (184 aa).

Residues Met-82–Asn-143 enclose the S4 RNA-binding domain.

It belongs to the universal ribosomal protein uS4 family. As to quaternary structure, part of the 30S ribosomal subunit. Contacts protein S5. The interaction surface between S4 and S5 is involved in control of translational fidelity.

It localises to the plastid. The protein localises to the chloroplast. In terms of biological role, one of the primary rRNA binding proteins, it binds directly to 16S rRNA where it nucleates assembly of the body of the 30S subunit. Functionally, with S5 and S12 plays an important role in translational accuracy. This chain is Small ribosomal subunit protein uS4c (rps4), found in Patersonia fragilis (Short purple-flag).